Consider the following 746-residue polypeptide: Methyl-CpG-binding domain-containing protein 13 (746 aa).

Short sequence motifs (nuclear localization signal) lie at residues Glu13–Val20 and Ile44–Asn51. One can recognise an MBD domain in the interval Val29 to Ser104. Disordered stretches follow at residues Ile131–Asp157, Leu169–Glu283, Pro295–Thr328, Thr348–Pro479, Thr518–Ala562, and Glu696–Asp746. Residues Leu169–Glu180 are compositionally biased toward basic and acidic residues. Residues Arg190–Glu199 show a composition bias toward polar residues. Residues Ser244 to Glu260 are compositionally biased toward basic and acidic residues. Positions Glu256–Asn263 match the Nuclear localization signal motif. Residues Val427 to Ser451 are compositionally biased toward polar residues. Residues Val465–Leu476 show a composition bias toward basic residues. Composition is skewed to polar residues over residues Pro529 to Arg546 and Lys702 to Thr730. Positions Gly732–Asp746 are enriched in basic and acidic residues.

It is found in the nucleus. Probable transcriptional regulator. In Arabidopsis thaliana (Mouse-ear cress), this protein is Methyl-CpG-binding domain-containing protein 13 (MBD13).